A 327-amino-acid polypeptide reads, in one-letter code: Tetraacyldisaccharide 4'-kinase (327 aa).

52-59 (TLGGAGKT) provides a ligand contact to ATP.

Belongs to the LpxK family.

It catalyses the reaction a lipid A disaccharide + ATP = a lipid IVA + ADP + H(+). It functions in the pathway glycolipid biosynthesis; lipid IV(A) biosynthesis; lipid IV(A) from (3R)-3-hydroxytetradecanoyl-[acyl-carrier-protein] and UDP-N-acetyl-alpha-D-glucosamine: step 6/6. Its function is as follows. Transfers the gamma-phosphate of ATP to the 4'-position of a tetraacyldisaccharide 1-phosphate intermediate (termed DS-1-P) to form tetraacyldisaccharide 1,4'-bis-phosphate (lipid IVA). The chain is Tetraacyldisaccharide 4'-kinase from Methylorubrum extorquens (strain CM4 / NCIMB 13688) (Methylobacterium extorquens).